A 301-amino-acid chain; its full sequence is Putative carboxypeptidase slr1534 (301 aa).

The active-site Nucleophile is the serine 116. Active-site charge relay system residues include glutamate 206 and histidine 276.

This sequence belongs to the peptidase S66 family.

In Synechocystis sp. (strain ATCC 27184 / PCC 6803 / Kazusa), this protein is Putative carboxypeptidase slr1534.